A 336-amino-acid polypeptide reads, in one-letter code: Isethionate-binding periplasmic protein DctP (336 aa).

The first 23 residues, Met-1–Ala-23, serve as a signal peptide directing secretion.

This sequence belongs to the bacterial solute-binding protein 7 family. In terms of assembly, the complex comprises the periplasmic solute receptor protein DctP, and the fused transmembrane protein DctMQ.

The protein resides in the periplasm. It catalyses the reaction 2-hydroxyethane-1-sulfonate(out) + Na(+)(out) = 2-hydroxyethane-1-sulfonate(in) + Na(+)(in). The protein operates within organosulfur degradation; alkanesulfonate degradation. Part of the tripartite ATP-independent periplasmic (TRAP) transport system DctPQM involved in the uptake of isethionate (2-hydroxyethanesulfonate), which is then catabolized by enzymes encoded by adjacent genes in the locus. The DctP subunit is the solute-binding protein. Thereby is involved in an anaerobic respiration pathway that converts the sulfonate isethionate to ammonia, acetate and sulfide. The chain is Isethionate-binding periplasmic protein DctP from Oleidesulfovibrio alaskensis (strain ATCC BAA-1058 / DSM 17464 / G20) (Desulfovibrio alaskensis).